Reading from the N-terminus, the 251-residue chain is 5'-nucleotidase SurE (251 aa).

A divalent metal cation-binding residues include aspartate 8, aspartate 9, serine 39, and asparagine 95.

This sequence belongs to the SurE nucleotidase family. Requires a divalent metal cation as cofactor.

The protein resides in the cytoplasm. The enzyme catalyses a ribonucleoside 5'-phosphate + H2O = a ribonucleoside + phosphate. Its function is as follows. Nucleotidase that shows phosphatase activity on nucleoside 5'-monophosphates. The chain is 5'-nucleotidase SurE from Clostridium botulinum (strain Eklund 17B / Type B).